Here is a 437-residue protein sequence, read N- to C-terminus: Probable inactive DNA (cytosine-5)-methyltransferase DRM1B (437 aa).

2 consecutive UBA domains span residues 20–60 (SAPS…LLQL) and 120–164 (EMSE…IYAP). The 195-residue stretch at 243 to 437 (VHRNLPDHAL…LIQLHTTSLC (195 aa)) folds into the SAM-dependent MTase DRM-type domain.

Belongs to the class I-like SAM-binding methyltransferase superfamily. DRM-methyltransferase family.

It localises to the nucleus. Its function is as follows. Involved in de novo DNA methylation. Involved in RNA-directed DNA methylation (RdDM). This chain is Probable inactive DNA (cytosine-5)-methyltransferase DRM1B, found in Oryza sativa subsp. japonica (Rice).